A 563-amino-acid polypeptide reads, in one-letter code: Ras and Rab interactor-like protein (563 aa).

Residues 181–208 (GWGTETPQQTEPETGQKYSLAPRKPTPH) are disordered. Positions 184–196 (TETPQQTEPETGQ) are enriched in low complexity. Residues 381–518 (AQELRRLRRR…IAHYQPDTGR (138 aa)) form the VPS9 domain. Residues 539–563 (TLHQQAQPTAQANQPFEEPWAIGDP) are disordered. The segment covering 542-553 (QQAQPTAQANQP) has biased composition (low complexity).

Interacts with RAB5A, RAB22A and MUSK. In terms of tissue distribution, detected in thymus and spleen (at protein level). Detected in lung, liver, kidney, spleen, thymus and skeletal muscle.

The protein localises to the cell projection. The protein resides in the ruffle. It is found in the cytoplasmic vesicle. In terms of biological role, guanine nucleotide exchange factor (GEF) for RAB5A and RAB22A that activates RAB5A and RAB22A by exchanging bound GDP for free GTP. Plays a role in endocytosis via its role in activating Rab family members. In Mus musculus (Mouse), this protein is Ras and Rab interactor-like protein (Rinl).